The chain runs to 103 residues: Large ribosomal subunit protein bL36m (103 aa).

Belongs to the bacterial ribosomal protein bL36 family. Component of the mitochondrial large ribosomal subunit (mt-LSU). Mature mammalian 55S mitochondrial ribosomes consist of a small (28S) and a large (39S) subunit. The 28S small subunit contains a 12S ribosomal RNA (12S mt-rRNA) and 30 different proteins. The 39S large subunit contains a 16S rRNA (16S mt-rRNA), a copy of mitochondrial valine transfer RNA (mt-tRNA(Val)), which plays an integral structural role, and 52 different proteins. bL36m has a zinc binding site.

The protein resides in the mitochondrion. The sequence is that of Large ribosomal subunit protein bL36m (MRPL36) from Homo sapiens (Human).